The primary structure comprises 949 residues: Probable transcriptional regulatory protein STB4 (949 aa).

Residues 87–113 constitute a DNA-binding region (zn(2)-C6 fungal-type); sequence CELCKKRKVKCDGNNPCLNCSKHQKEC. Low complexity-rich tracts occupy residues 164–178 and 200–212; these read DGVS…NPNS and SGSN…NNNS. 2 disordered regions span residues 164 to 214 and 862 to 888; these read DGVS…NSFP and GERE…ATRS. Positions 862-874 are enriched in basic and acidic residues; the sequence is GEREENADERQEN.

It localises to the nucleus. Binds to SIN3. The chain is Probable transcriptional regulatory protein STB4 (STB4) from Saccharomyces cerevisiae (strain ATCC 204508 / S288c) (Baker's yeast).